Here is a 54-residue protein sequence, read N- to C-terminus: Ovomucoid (54 aa).

The Kazal-like domain maps to 4-54 (VDCSDYPKPACTVEYMPLCGSDNKTYDNKCNFCNAVVDSNGTLTLSHFGKC). 3 cysteine pairs are disulfide-bonded: Cys-6–Cys-36, Cys-14–Cys-33, and Cys-22–Cys-54. Asn-43 is a glycosylation site (N-linked (GlcNAc...) asparagine).

Its subcellular location is the secreted. This Anser anser anser (Western greylag goose) protein is Ovomucoid.